We begin with the raw amino-acid sequence, 977 residues long: Pro-apoptotic serine protease NMA111 (977 aa).

The tract at residues Met-1–Ser-36 is disordered. Residues Val-64–Leu-254 form a serine protease region. Residues His-102, Asp-133, and Ser-216 each act as charge relay system in the active site. 2 PDZ domains span residues Gln-271–Gln-356 and Ser-749–Gly-835.

This sequence belongs to the peptidase S1C family.

It localises to the nucleus. In terms of biological role, nuclear serine protease which mediates apoptosis. The sequence is that of Pro-apoptotic serine protease NMA111 (NMA111) from Eremothecium gossypii (strain ATCC 10895 / CBS 109.51 / FGSC 9923 / NRRL Y-1056) (Yeast).